Here is a 171-residue protein sequence, read N- to C-terminus: Mitoferrin-1 (171 aa).

The disordered stretch occupies residues 1 to 40 (MELRRGGVGSQARARRMDGDSRDGGGGCKDAGSEDYENLP). The stretch at 43–131 (ASLSTHMTAG…FACYENMKRT (89 aa)) is one Solcar repeat. The next 3 helical transmembrane spans lie at 45-64 (LSTH…SVMY), 105-125 (RGLN…FACY), and 143-163 (HLAN…PSTD).

This sequence belongs to the mitochondrial carrier (TC 2.A.29) family. Interacts with ACB10; this interaction stabilizes SLC25A37 and enhances the function of SLC25A37 to import mitochondrial iron during erythroid differentiation.

It localises to the mitochondrion inner membrane. The enzyme catalyses Fe(2+)(in) = Fe(2+)(out). Functionally, mitochondrial iron transporter that specifically mediates iron uptake in developing erythroid cells, thereby playing an essential role in heme biosynthesis. This Bos taurus (Bovine) protein is Mitoferrin-1 (SLC25A37).